The chain runs to 378 residues: Histidinol-phosphate aminotransferase (378 aa).

The interval 1–20 (MSVSAKETQRHPARPEPRPG) is disordered. Positions 7-17 (ETQRHPARPEP) are enriched in basic and acidic residues. An N6-(pyridoxal phosphate)lysine modification is found at Lys-232.

The protein belongs to the class-II pyridoxal-phosphate-dependent aminotransferase family. Histidinol-phosphate aminotransferase subfamily. Homodimer. The cofactor is pyridoxal 5'-phosphate.

The enzyme catalyses L-histidinol phosphate + 2-oxoglutarate = 3-(imidazol-4-yl)-2-oxopropyl phosphate + L-glutamate. It participates in amino-acid biosynthesis; L-histidine biosynthesis; L-histidine from 5-phospho-alpha-D-ribose 1-diphosphate: step 7/9. The sequence is that of Histidinol-phosphate aminotransferase from Azorhizobium caulinodans (strain ATCC 43989 / DSM 5975 / JCM 20966 / LMG 6465 / NBRC 14845 / NCIMB 13405 / ORS 571).